Consider the following 259-residue polypeptide: Ditrans,polycis-undecaprenyl-diphosphate synthase ((2E,6E)-farnesyl-diphosphate specific) (259 aa).

The active site involves D32. D32 contacts Mg(2+). Residues 33–36, W37, R45, H49, and 77–79 contribute to the substrate site; these read GNGR and STE. N80 functions as the Proton acceptor in the catalytic mechanism. Residues W81, R83, R203, and 209–211 contribute to the substrate site; that span reads RIS. A Mg(2+)-binding site is contributed by E222.

The protein belongs to the UPP synthase family. As to quaternary structure, homodimer. Mg(2+) serves as cofactor.

The enzyme catalyses 8 isopentenyl diphosphate + (2E,6E)-farnesyl diphosphate = di-trans,octa-cis-undecaprenyl diphosphate + 8 diphosphate. In terms of biological role, catalyzes the sequential condensation of isopentenyl diphosphate (IPP) with (2E,6E)-farnesyl diphosphate (E,E-FPP) to yield (2Z,6Z,10Z,14Z,18Z,22Z,26Z,30Z,34E,38E)-undecaprenyl diphosphate (di-trans,octa-cis-UPP). UPP is the precursor of glycosyl carrier lipid in the biosynthesis of bacterial cell wall polysaccharide components such as peptidoglycan and lipopolysaccharide. The polypeptide is Ditrans,polycis-undecaprenyl-diphosphate synthase ((2E,6E)-farnesyl-diphosphate specific) (uppS) (Lactiplantibacillus plantarum (strain ATCC BAA-793 / NCIMB 8826 / WCFS1) (Lactobacillus plantarum)).